A 44-amino-acid polypeptide reads, in one-letter code: Cytochrome b559 subunit beta (44 aa).

A helical membrane pass occupies residues 19-35 (WLAIHGIAVPTIFFLGA). H23 is a heme binding site.

Belongs to the PsbE/PsbF family. As to quaternary structure, heterodimer of an alpha subunit and a beta subunit. PSII is composed of 1 copy each of membrane proteins PsbA, PsbB, PsbC, PsbD, PsbE, PsbF, PsbH, PsbI, PsbJ, PsbK, PsbL, PsbM, PsbT, PsbX, PsbY, PsbZ, Psb30/Ycf12, at least 3 peripheral proteins of the oxygen-evolving complex and a large number of cofactors. It forms dimeric complexes. The cofactor is heme b.

It is found in the plastid. The protein localises to the chloroplast thylakoid membrane. In terms of biological role, this b-type cytochrome is tightly associated with the reaction center of photosystem II (PSII). PSII is a light-driven water:plastoquinone oxidoreductase that uses light energy to abstract electrons from H(2)O, generating O(2) and a proton gradient subsequently used for ATP formation. It consists of a core antenna complex that captures photons, and an electron transfer chain that converts photonic excitation into a charge separation. The chain is Cytochrome b559 subunit beta from Chlamydomonas reinhardtii (Chlamydomonas smithii).